The sequence spans 394 residues: Protein TsgA homolog (394 aa).

12 helical membrane-spanning segments follow: residues 11–31 (WISFFSYALTGAVVIVTGMVL), 51–71 (FLNAGILLAVFLNAWLMEIVP), 76–96 (LIFGFVLMVLAVLGLMNSHSL), 101–121 (LCMFVLGVVSGITMSIGTFLI), 135–155 (LFTDSFFSMAGTLFPIIAAAI), 163–183 (YWVYACIGVIYVAIFILALCF), 205–225 (LGVALLAVAALCYILGQLGFI), 245–265 (SVVGYFWTAYMIGMWAFSAIL), 273–293 (IVTALALASTLLMYWFINTTD), 299–319 (WIIMGLGFFSSAIYTTIITLG), 333–353 (FILTCGTIGTMLTFVVTGPIV), and 362–382 (LATTNSLYAVVFLMCLLLGFV).

This sequence belongs to the major facilitator superfamily. TsgA family.

Its subcellular location is the cell inner membrane. In Erwinia tasmaniensis (strain DSM 17950 / CFBP 7177 / CIP 109463 / NCPPB 4357 / Et1/99), this protein is Protein TsgA homolog.